The sequence spans 673 residues: Probable urea active transporter 2 (673 aa).

14 consecutive transmembrane segments (helical) span residues 8–28 (GYGY…MAII), 83–103 (IMGG…FLFL), 132–152 (VYLF…LLGG), 164–184 (TVAA…LGGL), 196–218 (VMIY…LIGS), 249–269 (MMYL…GDPG), 287–307 (LMGG…AGLA), 336–356 (IYGM…VMLF), 391–411 (QLVR…GALS), 424–446 (LLTF…LFWN), 451–471 (FSLV…WLAS), 492–512 (FVGN…LSYI), 559–579 (IGIN…ALLG), and 592–612 (LIIV…LFPL).

It belongs to the sodium:solute symporter (SSF) (TC 2.A.21) family.

It is found in the endoplasmic reticulum membrane. Its function is as follows. Involved in active transport of urea. This is Probable urea active transporter 2 (dur3-2) from Schizosaccharomyces pombe (strain 972 / ATCC 24843) (Fission yeast).